The primary structure comprises 476 residues: NADH-quinone oxidoreductase subunit N (476 aa).

Helical transmembrane passes span 7-27, 33-53, 59-79, 100-120, 122-142, 156-176, 199-219, 237-257, 265-285, 305-325, 363-383, 399-419, and 437-457; these read LTVE…GLLV, RGIA…AFGM, VVLG…LFLV, GEYY…ASSG, LVSL…LAAF, YVLL…LVYG, LLLG…AVPF, FLSV…FFGA, WVQL…LVAI, LLLG…YYAM, VAAL…MAGF, IWLA…YLLV, and VAPG…ILGI.

This sequence belongs to the complex I subunit 2 family. NDH-1 is composed of 14 different subunits. Subunits NuoA, H, J, K, L, M, N constitute the membrane sector of the complex.

It localises to the cell membrane. It carries out the reaction a quinone + NADH + 5 H(+)(in) = a quinol + NAD(+) + 4 H(+)(out). NDH-1 shuttles electrons from NADH, via FMN and iron-sulfur (Fe-S) centers, to quinones in the respiratory chain. The immediate electron acceptor for the enzyme in this species is believed to be a menaquinone. Couples the redox reaction to proton translocation (for every two electrons transferred, four hydrogen ions are translocated across the cytoplasmic membrane), and thus conserves the redox energy in a proton gradient. The chain is NADH-quinone oxidoreductase subunit N from Moorella thermoacetica (strain ATCC 39073 / JCM 9320).